We begin with the raw amino-acid sequence, 504 residues long: D-alanine--D-alanyl carrier protein ligase (504 aa).

ATP is bound at residue 152 to 153 (TS). Residue Asp197 participates in D-alanine binding. 292–297 (NTYGPT) lines the ATP pocket. Val301 contributes to the D-alanine binding site. Residues Asp383, 394-397 (YNGR), and Lys492 each bind ATP. Lys492 is a binding site for D-alanine.

The protein belongs to the ATP-dependent AMP-binding enzyme family. DltA subfamily.

It is found in the cytoplasm. The enzyme catalyses holo-[D-alanyl-carrier protein] + D-alanine + ATP = D-alanyl-[D-alanyl-carrier protein] + AMP + diphosphate. It participates in cell wall biogenesis; lipoteichoic acid biosynthesis. In terms of biological role, catalyzes the first step in the D-alanylation of lipoteichoic acid (LTA), the activation of D-alanine and its transfer onto the D-alanyl carrier protein (Dcp) DltC. In an ATP-dependent two-step reaction, forms a high energy D-alanyl-AMP intermediate, followed by transfer of the D-alanyl residue as a thiol ester to the phosphopantheinyl prosthetic group of the Dcp. D-alanylation of LTA plays an important role in modulating the properties of the cell wall in Gram-positive bacteria, influencing the net charge of the cell wall. The polypeptide is D-alanine--D-alanyl carrier protein ligase (Bacillus cereus (strain ATCC 10987 / NRS 248)).